The chain runs to 218 residues: Oxidative stress regulator AosR (218 aa).

The short motif at 5–9 (CGRRC) is the CXXXC element. A disulfide bridge connects residues Cys5 and Cys9.

Belongs to the AosR family. In terms of assembly, homodimer. Under oxidative stress, interacts with the extracytoplasmic-function (ECF) RNA polymerase sigma factor SigH.

Activity is modulated by the formation of a disulfide bound within the N-terminal Cys-X-X-X-Cys (CXXXC) motif. This intramolecular disulfide bond is formed in response to oxidative stress, and results in oxidative stress-dependent interaction with the sigma factor SigH. Functionally, transcription factor crucial for intra-mycobacterial redox homeostasis and protection against host-derived oxidative and nitrosative radicals. In response to oxidative stress, interacts with the ECF sigma factor SigH and, in conjunction with SigH, binds to an auxiliary promoter upstream of mec-cysO-cysM, leading to the transcriptional activation of these genes encoding a non-canonical actinomycete-specific cysteine biosynthesis pathway. Increased transcription of mec-cysO-cysM results in enhanced production of L-cysteine and cysteine-derived antioxidant molecules. Increased production of cysteine protects mycobacteria cells from host phagocyte-derived oxidative and nitrosative stress, thus facilitating the mycobacterial growth in the host. The sequence is that of Oxidative stress regulator AosR from Mycobacterium bovis (strain ATCC BAA-935 / AF2122/97).